A 207-amino-acid polypeptide reads, in one-letter code: Protein GrpE (207 aa).

The segment covering 1-11 (MTETDGQKDNN) has biased composition (basic and acidic residues). A disordered region spans residues 1–40 (MTETDGQKDNNQDTAQAAADPVVSKPYIMPDDPEEGSNEA).

It belongs to the GrpE family. In terms of assembly, homodimer.

It is found in the cytoplasm. In terms of biological role, participates actively in the response to hyperosmotic and heat shock by preventing the aggregation of stress-denatured proteins, in association with DnaK and GrpE. It is the nucleotide exchange factor for DnaK and may function as a thermosensor. Unfolded proteins bind initially to DnaJ; upon interaction with the DnaJ-bound protein, DnaK hydrolyzes its bound ATP, resulting in the formation of a stable complex. GrpE releases ADP from DnaK; ATP binding to DnaK triggers the release of the substrate protein, thus completing the reaction cycle. Several rounds of ATP-dependent interactions between DnaJ, DnaK and GrpE are required for fully efficient folding. In Rhodopseudomonas palustris (strain ATCC BAA-98 / CGA009), this protein is Protein GrpE.